The sequence spans 139 residues: Small ribosomal subunit protein uS12m (139 aa).

The N-terminal 29 residues, 1–29 (MSWSGLLRGLSMSLNYGLALAPRPWGTRP), are a transit peptide targeting the mitochondrion. A disordered region spans residues 37–57 (HRRGPPKFPPSKPGPTEGRPQ).

This sequence belongs to the universal ribosomal protein uS12 family. In terms of assembly, component of the mitochondrial ribosome small subunit (28S) which comprises a 12S rRNA and about 30 distinct proteins.

The protein resides in the mitochondrion. This chain is Small ribosomal subunit protein uS12m (MRPS12), found in Bos taurus (Bovine).